Reading from the N-terminus, the 739-residue chain is Oxysterol-binding protein-related protein 9 (739 aa).

Residues 2–99 (ASIMEGPLSK…WIHALEETIL (98 aa)) enclose the PH domain. 2 disordered regions span residues 220–292 (TQAS…SYSS) and 306–371 (SSTS…ESVE). Residues 249–259 (NLGSRQSPTPI) show a composition bias toward polar residues. Residues 260-276 (STGSGQSAPSSSLTSPS) are compositionally biased toward low complexity. Composition is skewed to polar residues over residues 277–292 (HVNL…SYSS), 306–330 (SSTS…STGA), and 338–352 (TESL…TNEA).

This sequence belongs to the OSBP family.

It carries out the reaction a 1,2-diacyl-sn-glycero-3-phospho-(1D-myo-inositol 4-phosphate)(out) + a 1,2-diacyl-sn-glycero-3-phospho-L-serine(in) = a 1,2-diacyl-sn-glycero-3-phospho-(1D-myo-inositol 4-phosphate)(in) + a 1,2-diacyl-sn-glycero-3-phospho-L-serine(out). Functionally, interacts with OSBPL11 to function as lipid transfer proteins. Together they form a heterodimer that localizes at the ER-trans-Golgi membrane contact sites, and exchanges phosphatidylserine (1,2-diacyl-sn-glycero-3-phospho-L-serine, PS) for phosphatidylinositol-4-phosphate (1,2-diacyl-sn-glycero-3-phospho-(1D-myo-inositol 4-phosphate), PI(4)P) between the two organelles, a step that is critical for sphingomyelin synthesis in the Golgi complex. This is Oxysterol-binding protein-related protein 9 (osbpl9) from Xenopus tropicalis (Western clawed frog).